Consider the following 259-residue polypeptide: Protein IQ-DOMAIN 10 (259 aa).

The segment at Lys-18–Ser-39 is disordered. An IQ domain is found at Glu-50–Arg-77. The segment at Arg-61–Ser-71 is calmodulin-binding. The interval Lys-226–Gly-259 is disordered.

The protein belongs to the IQD family. In terms of assembly, binds to multiple calmodulin (CaM) in the presence of Ca(2+) and CaM-like proteins.

It localises to the nucleus. The protein localises to the cytoplasm. It is found in the cytoskeleton. May be involved in cooperative interactions with calmodulins or calmodulin-like proteins. Recruits calmodulin proteins to microtubules, thus being a potential scaffold in cellular signaling and trafficking. May associate with nucleic acids and regulate gene expression at the transcriptional or post-transcriptional level. The protein is Protein IQ-DOMAIN 10 of Arabidopsis thaliana (Mouse-ear cress).